The chain runs to 511 residues: Synaptotagmin-6 (511 aa).

Over 1–59 (MSGVWGAGGPRCQAALAVLASLCRARPPPLGLDVETCRSFELQSPEQSPSAADSGTSVS) the chain is Vesicular. Positions 12-38 (CQAALAVLASLCRARPPPLGLDVETCR) are cysteine motif. Residues 60–80 (LLAVVVIVCGVALVAVFLFLF) form a helical membrane-spanning segment. At 81–511 (WKLCWMPWRK…KSFKEGTPRL (431 aa)) the chain is on the cytoplasmic side. Disordered stretches follow at residues 92 to 119 (EASS…ADKL) and 157 to 182 (TKLQ…LPRQ). Low complexity predominate over residues 94–103 (SSPSSANPAS). Polar residues-rich tracts occupy residues 104–113 (ETLQSPSSRG) and 160–172 (QRQT…STRH). The residue at position 217 (Ser217) is a Phosphoserine. C2 domains are found at residues 230-351 (SCGK…SIWK) and 362-495 (DLGE…AHWH). 11 residues coordinate Ca(2+): Asp261, Asp267, Asp319, Phe320, Asp321, Ser324, Asp327, Asp393, Asp399, Asp453, and Asp455. A necessary for cell membrane association (isoform 2) region spans residues 483–511 (MLAYPRKPIAHWHSLVEVKKSFKEGTPRL).

This sequence belongs to the synaptotagmin family. As to quaternary structure, isoform 1: Homodimer; disulfide-linked via the cysteine motif. Isoform 1: Can also form heterodimers with SYT3, SYT7, SYT9 and SYT10. Isoform 1: Interacts with STX1A, STX1B and STX2; the interaction is Ca(2+)-dependent. Isoform 2: Is not able to form homodimer and heterodimers. It depends on Ca(2+) as a cofactor. In terms of tissue distribution, isoform 1 is expressed in the olfactory bulb. Isoform 2 is expressed in the brain (at protein level).

The protein localises to the cytoplasmic vesicle. It is found in the secretory vesicle. The protein resides in the synaptic vesicle membrane. Its subcellular location is the membrane. It localises to the cytoplasm. The protein localises to the cytosol. It is found in the cell membrane. Its function is as follows. May be involved in Ca(2+)-dependent exocytosis of secretory vesicles through Ca(2+) and phospholipid binding to the C2 domain or may serve as Ca(2+) sensors in the process of vesicular trafficking and exocytosis. May mediate Ca(2+)-regulation of exocytosis in acrosomal reaction in sperm. The chain is Synaptotagmin-6 (Syt6) from Mus musculus (Mouse).